We begin with the raw amino-acid sequence, 468 residues long: Aldehyde dehydrogenase family 3 member B1 (468 aa).

Position 1 is an N-acetylmethionine (Met-1). Residue 188–193 (GNPQVG) coordinates NAD(+). Residues Glu-210 and Cys-244 contribute to the active site. Cys-463 carries the S-palmitoyl cysteine lipid modification. Cys-465 is modified (cysteine methyl ester). A lipid anchor (S-geranylgeranyl cysteine) is attached at Cys-465. A propeptide spans 466 to 468 (TLL) (removed in mature form).

This sequence belongs to the aldehyde dehydrogenase family. Post-translationally, dually lipidated in the C-terminus; prenylation occurs prior to, and is a prerequisite for palmitoylation. It is also required for activity towards long-chain substrates.

The protein localises to the cell membrane. It catalyses the reaction an aldehyde + NAD(+) + H2O = a carboxylate + NADH + 2 H(+). It carries out the reaction a long-chain fatty aldehyde + NAD(+) + H2O = a long-chain fatty acid + NADH + 2 H(+). The catalysed reaction is a medium-chain fatty aldehyde + NAD(+) + H2O = a medium-chain fatty acid + NADH + 2 H(+). The enzyme catalyses octanal + NAD(+) + H2O = octanoate + NADH + 2 H(+). It catalyses the reaction nonanal + NAD(+) + H2O = nonanoate + NADH + 2 H(+). It carries out the reaction hexadecanoate + NADH + 2 H(+) = hexadecanal + NAD(+) + H2O. The catalysed reaction is (2E)-octenal + NAD(+) + H2O = (2E)-octenoate + NADH + 2 H(+). The enzyme catalyses (E)-non-2-enal + NAD(+) + H2O = (E)-non-2-enoate + NADH + 2 H(+). It catalyses the reaction (E)-4-hydroxynon-2-enal + NAD(+) + H2O = (E)-4-hydroxynon-2-enoate + NADH + 2 H(+). It carries out the reaction (2E)-hexadecenal + NAD(+) + H2O = (E)-hexadec-2-enoate + NADH + 2 H(+). The catalysed reaction is benzaldehyde + NAD(+) + H2O = benzoate + NADH + 2 H(+). The enzyme catalyses an aldehyde + NADP(+) + H2O = a carboxylate + NADPH + 2 H(+). It catalyses the reaction a medium-chain fatty aldehyde + NADP(+) + H2O = a medium-chain fatty acid + NADPH + 2 H(+). It carries out the reaction hexanal + NADP(+) + H2O = hexanoate + NADPH + 2 H(+). The catalysed reaction is octanal + NADP(+) + H2O = octanoate + NADPH + 2 H(+). The enzyme catalyses nonanal + NADP(+) + H2O = nonanoate + NADPH + 2 H(+). It catalyses the reaction (2E)-octenal + NADP(+) + H2O = (2E)-octenoate + NADPH + 2 H(+). It carries out the reaction (E)-non-2-enal + NADP(+) + H2O = (E)-non-2-enoate + NADPH + 2 H(+). The catalysed reaction is (E)-4-hydroxynon-2-enal + NADP(+) + H2O = (E)-4-hydroxynon-2-enoate + NADPH + 2 H(+). The enzyme catalyses benzaldehyde + NADP(+) + H2O = benzoate + NADPH + 2 H(+). The protein operates within alcohol metabolism; ethanol degradation; acetate from ethanol: step 2/2. Oxidizes medium and long chain saturated and unsaturated fatty aldehydes generated in the plasma membrane into non-toxic fatty acids. May have a protective role against the cytotoxicity induced by lipid peroxidation. Short-chain fatty aldehydes are not good substrates. Can use both NADP(+) and NAD(+) as electron acceptor in vitro, however in vivo preference will depend on their tissue levels. Low activity towards acetaldehyde and 3,4-dihydroxyphenylacetaldehyde. Able to metabolize aromatic aldehydes such as benzaldehyde to their acid form. The polypeptide is Aldehyde dehydrogenase family 3 member B1 (ALDH3B1) (Bos taurus (Bovine)).